Here is a 214-residue protein sequence, read N- to C-terminus: Small ribosomal subunit protein uS5 (214 aa).

Positions 54–117 (MKYEVIDIGM…RDAKMHVIPV (64 aa)) constitute an S5 DRBM domain.

The protein belongs to the universal ribosomal protein uS5 family. As to quaternary structure, part of the 30S ribosomal subunit. Contacts protein S4.

With S4 and S12 plays an important role in translational accuracy. The protein is Small ribosomal subunit protein uS5 of Metallosphaera sedula (strain ATCC 51363 / DSM 5348 / JCM 9185 / NBRC 15509 / TH2).